The sequence spans 282 residues: Pantothenate synthetase (282 aa).

30-37 serves as a coordination point for ATP; that stretch reads MGYLHEGH. Residue His37 is the Proton donor of the active site. Residue Gln61 coordinates (R)-pantoate. Gln61 provides a ligand contact to beta-alanine. 147–150 lines the ATP pocket; sequence GQKD. Gln153 lines the (R)-pantoate pocket. Residues Val176 and 184 to 187 contribute to the ATP site; that span reads MSSR.

The protein belongs to the pantothenate synthetase family. As to quaternary structure, homodimer.

It localises to the cytoplasm. The enzyme catalyses (R)-pantoate + beta-alanine + ATP = (R)-pantothenate + AMP + diphosphate + H(+). The protein operates within cofactor biosynthesis; (R)-pantothenate biosynthesis; (R)-pantothenate from (R)-pantoate and beta-alanine: step 1/1. Functionally, catalyzes the condensation of pantoate with beta-alanine in an ATP-dependent reaction via a pantoyl-adenylate intermediate. In Caldicellulosiruptor bescii (strain ATCC BAA-1888 / DSM 6725 / KCTC 15123 / Z-1320) (Anaerocellum thermophilum), this protein is Pantothenate synthetase.